A 586-amino-acid polypeptide reads, in one-letter code: Phosphomethylpyrimidine synthase (586 aa).

The segment at 1–33 (MKQSVSAEQIELKSSLPGSKKVYVDGPREGMKV) is disordered. The span at 22–33 (VYVDGPREGMKV) shows a compositional bias: basic and acidic residues. Substrate is bound by residues asparagine 193, methionine 222, tyrosine 251, histidine 287, 307 to 309 (SRG), 348 to 351 (DGLR), and glutamate 387. Histidine 391 contacts Zn(2+). Tyrosine 414 contacts substrate. A Zn(2+)-binding site is contributed by histidine 455. Positions 535, 538, and 543 each coordinate [4Fe-4S] cluster.

Belongs to the ThiC family. [4Fe-4S] cluster serves as cofactor.

The catalysed reaction is 5-amino-1-(5-phospho-beta-D-ribosyl)imidazole + S-adenosyl-L-methionine = 4-amino-2-methyl-5-(phosphooxymethyl)pyrimidine + CO + 5'-deoxyadenosine + formate + L-methionine + 3 H(+). It participates in cofactor biosynthesis; thiamine diphosphate biosynthesis. Catalyzes the synthesis of the hydroxymethylpyrimidine phosphate (HMP-P) moiety of thiamine from aminoimidazole ribotide (AIR) in a radical S-adenosyl-L-methionine (SAM)-dependent reaction. The protein is Phosphomethylpyrimidine synthase of Bacillus cereus (strain B4264).